A 250-amino-acid chain; its full sequence is 5'-nucleotidase SurE (250 aa).

Residues Asp8, Asp9, Ser40, and Asn95 each coordinate a divalent metal cation.

This sequence belongs to the SurE nucleotidase family. A divalent metal cation serves as cofactor.

It is found in the cytoplasm. It catalyses the reaction a ribonucleoside 5'-phosphate + H2O = a ribonucleoside + phosphate. Nucleotidase that shows phosphatase activity on nucleoside 5'-monophosphates. This chain is 5'-nucleotidase SurE, found in Nitratidesulfovibrio vulgaris (strain ATCC 29579 / DSM 644 / CCUG 34227 / NCIMB 8303 / VKM B-1760 / Hildenborough) (Desulfovibrio vulgaris).